Here is a 433-residue protein sequence, read N- to C-terminus: GPI mannosyltransferase 2 (433 aa).

Transmembrane regions (helical) follow at residues 4–24, 109–129, 148–165, 172–194, 204–226, 247–267, 322–342, 354–374, and 410–430; these read LVKP…IISL, TAVI…FYLT, ATFT…GFFT, LSFL…IIPY, FYYT…NCIL, ALLF…RQQF, IPNF…TFYF, LIFI…VQII, and GYIY…VFFL.

This sequence belongs to the PIGV family.

Its subcellular location is the endoplasmic reticulum membrane. Its pathway is glycolipid biosynthesis; glycosylphosphatidylinositol-anchor biosynthesis. Mannosyltransferase involved in glycosylphosphatidylinositol-anchor biosynthesis. Transfers the second mannose to the glycosylphosphatidylinositol during GPI precursor assembly. In Candida glabrata (strain ATCC 2001 / BCRC 20586 / JCM 3761 / NBRC 0622 / NRRL Y-65 / CBS 138) (Yeast), this protein is GPI mannosyltransferase 2 (GPI18).